The chain runs to 291 residues: Diaminopimelate epimerase (291 aa).

Residues Asn-13, Gln-46, and Asn-66 each contribute to the substrate site. Cys-75 acts as the Proton donor in catalysis. Substrate is bound by residues 76–77, Asn-156, Asn-189, and 207–208; these read GN and ER. Cys-216 acts as the Proton acceptor in catalysis. Residue 217–218 coordinates substrate; sequence GS.

It belongs to the diaminopimelate epimerase family. As to quaternary structure, homodimer.

It is found in the cytoplasm. The enzyme catalyses (2S,6S)-2,6-diaminopimelate = meso-2,6-diaminopimelate. The protein operates within amino-acid biosynthesis; L-lysine biosynthesis via DAP pathway; DL-2,6-diaminopimelate from LL-2,6-diaminopimelate: step 1/1. In terms of biological role, catalyzes the stereoinversion of LL-2,6-diaminopimelate (L,L-DAP) to meso-diaminopimelate (meso-DAP), a precursor of L-lysine and an essential component of the bacterial peptidoglycan. The sequence is that of Diaminopimelate epimerase from Rhodospirillum centenum (strain ATCC 51521 / SW).